The sequence spans 449 residues: Aminopeptidase C (449 aa).

Residues Cys-70, His-364, and Asn-385 contribute to the active site.

The protein belongs to the peptidase C1 family. Homohexamer.

The protein localises to the cytoplasm. The catalysed reaction is Inactivates bleomycin B2 (a cytotoxic glycometallopeptide) by hydrolysis of a carboxyamide bond of beta-aminoalanine, but also shows general aminopeptidase activity. The specificity varies somewhat with source, but amino acid arylamides of Met, Leu and Ala are preferred.. This Lactobacillus helveticus (Lactobacillus suntoryeus) protein is Aminopeptidase C (pepC).